An 83-amino-acid chain; its full sequence is Small ribosomal subunit protein bS20 (83 aa).

This sequence belongs to the bacterial ribosomal protein bS20 family.

Binds directly to 16S ribosomal RNA. This Staphylococcus aureus (strain JH1) protein is Small ribosomal subunit protein bS20.